The primary structure comprises 349 residues: FK506-binding protein-like (349 aa).

Phosphothreonine is present on threonine 3. The disordered stretch occupies residues 36–55 (RQQPRDPPTETLELEVSPDP). 3 TPR repeats span residues 210 to 243 (AREE…LLTL), 252 to 285 (TVLH…EPGH), and 286 to 319 (LKAL…DPKN).

As to quaternary structure, forms a ternary complex with CDKN1A/p21 and HSP90AB1/Hsp90. In terms of tissue distribution, ubiquitously expressed with higher levels in testis.

May be involved in response to X-ray. Regulates p21 protein stability by binding to Hsp90 and p21. This chain is FK506-binding protein-like (FKBPL), found in Homo sapiens (Human).